Reading from the N-terminus, the 272-residue chain is Small ribosomal subunit protein uS2 (272 aa).

The tract at residues 251–272 (LLTEGAPAAEAPAEAEGETKAE) is disordered. Residues 253 to 264 (TEGAPAAEAPAE) are compositionally biased toward low complexity.

The protein belongs to the universal ribosomal protein uS2 family.

The sequence is that of Small ribosomal subunit protein uS2 from Bifidobacterium adolescentis (strain ATCC 15703 / DSM 20083 / NCTC 11814 / E194a).